The chain runs to 129 residues: Glycine cleavage system H protein (129 aa).

The 83-residue stretch at 24–106 (LVRVGISAFA…HGEGWLLVVR (83 aa)) folds into the Lipoyl-binding domain. Position 65 is an N6-lipoyllysine (Lys-65).

The protein belongs to the GcvH family. As to quaternary structure, the glycine cleavage system is composed of four proteins: P, T, L and H. Requires (R)-lipoate as cofactor.

In terms of biological role, the glycine cleavage system catalyzes the degradation of glycine. The H protein shuttles the methylamine group of glycine from the P protein to the T protein. The sequence is that of Glycine cleavage system H protein from Prochlorococcus marinus (strain MIT 9303).